The primary structure comprises 458 residues: A-type ATP synthase subunit B (458 aa).

This sequence belongs to the ATPase alpha/beta chains family. Has multiple subunits with at least A(3), B(3), C, D, E, F, H, I and proteolipid K(x).

It is found in the cell membrane. Its function is as follows. Component of the A-type ATP synthase that produces ATP from ADP in the presence of a proton gradient across the membrane. The B chain is a regulatory subunit. The sequence is that of A-type ATP synthase subunit B from Methanocella arvoryzae (strain DSM 22066 / NBRC 105507 / MRE50).